The sequence spans 95 residues: Co-chaperonin GroES (95 aa).

It belongs to the GroES chaperonin family. In terms of assembly, heptamer of 7 subunits arranged in a ring. Interacts with the chaperonin GroEL.

It localises to the cytoplasm. In terms of biological role, together with the chaperonin GroEL, plays an essential role in assisting protein folding. The GroEL-GroES system forms a nano-cage that allows encapsulation of the non-native substrate proteins and provides a physical environment optimized to promote and accelerate protein folding. GroES binds to the apical surface of the GroEL ring, thereby capping the opening of the GroEL channel. This Alkalilimnicola ehrlichii (strain ATCC BAA-1101 / DSM 17681 / MLHE-1) protein is Co-chaperonin GroES.